The following is a 524-amino-acid chain: Lycopene epsilon cyclase, chloroplastic (524 aa).

Residues 1-45 constitute a chloroplast transit peptide; the sequence is MECVGARNFAAMAVSTFPSWSCRRKFPVVKRYSYRNIRFGLCSVR. 111-139 serves as a coordination point for NAD(+); that stretch reads LVVIGCGPAGLALAAESAKLGLKVGLIGP. 2 helical membrane passes run 441–461 and 475–495; these read FFLF…RSFF and FLGS…MFVI.

The protein belongs to the lycopene cyclase family.

The protein localises to the plastid. It localises to the chloroplast membrane. It carries out the reaction a carotenoid psi-end group = a carotenoid epsilon-end group. It functions in the pathway carotenoid biosynthesis; alpha-zeacarotene biosynthesis. Its pathway is carotenoid biosynthesis; delta-carotene biosynthesis. In terms of biological role, involved in carotenoid biosynthesis. Catalyzes the single epsilon-cyclization reaction which converts lycopene to delta-carotene and neurosporene to alpha-zeacarotene. Required for lutein biosynthesis. The chain is Lycopene epsilon cyclase, chloroplastic from Arabidopsis thaliana (Mouse-ear cress).